A 109-amino-acid chain; its full sequence is Iron-sulfur cluster assembly protein CyaY (109 aa).

Belongs to the frataxin family.

Functionally, involved in iron-sulfur (Fe-S) cluster assembly. May act as a regulator of Fe-S biogenesis. This is Iron-sulfur cluster assembly protein CyaY from Bordetella pertussis (strain Tohama I / ATCC BAA-589 / NCTC 13251).